Consider the following 160-residue polypeptide: UPF0225 protein CGSHiGG_04185 (160 aa).

This sequence belongs to the UPF0225 family.

This is UPF0225 protein CGSHiGG_04185 from Haemophilus influenzae (strain PittGG).